A 301-amino-acid polypeptide reads, in one-letter code: Phospholipase A1 VesT1.02 (301 aa).

6 cysteine pairs are disulfide-bonded: cysteine 87–cysteine 294, cysteine 176–cysteine 245, cysteine 181–cysteine 262, cysteine 219–cysteine 228, cysteine 240–cysteine 246, and cysteine 267–cysteine 269. The active-site Nucleophile is serine 137. The active-site Charge relay system is the aspartate 165. The active-site Charge relay system is histidine 230.

It belongs to the AB hydrolase superfamily. Lipase family. Post-translationally, is not glycosylated. As to expression, expressed by the venom gland.

The protein resides in the secreted. It catalyses the reaction a 1,2-diacyl-sn-glycero-3-phosphocholine + H2O = a 2-acyl-sn-glycero-3-phosphocholine + a fatty acid + H(+). In terms of biological role, catalyzes the hydrolysis of phosphatidylcholine with phospholipase A1 activity. Shows hemolytic activity. This Vespa tropica (Greater banded hornet) protein is Phospholipase A1 VesT1.02.